We begin with the raw amino-acid sequence, 1462 residues long: Gag-Pro-Pol polyprotein (1462 aa).

A lipid anchor (N-myristoyl glycine; by host) is attached at glycine 2. The segment at 93–143 is disordered; sequence QIPSHPAPPPPSSPTHDPPDSDPQIPPPYVEPTAPQVLPVMHPHGVPPTHR. A Phosphoserine; by host MAPK1 modification is found at serine 105. A PPXY motif motif is present at residues 118 to 121; sequence PPPY. Positions 124-127 match the PTAP/PSAP motif motif; the sequence is PTAP. 2 consecutive CCHC-type zinc fingers follow at residues 355–372 and 378–395; these read QPCFRCGKAGHWSRDCAQ and GPCPLCQDPTHWKRDCPR. Positions 476-554 constitute a Peptidase A2 domain; that stretch reads IEALLDTGAD…NNWAIIGRDA (79 aa). Residue aspartate 481 is the For protease activity; shared with dimeric partner of the active site. Positions 614 to 804 constitute a Reverse transcriptase domain; sequence LEAGHIEPYT…GTIKFLGQII (191 aa). 9 residues coordinate Mg(2+): aspartate 680, aspartate 755, aspartate 756, aspartate 1040, glutamate 1074, aspartate 1096, aspartate 1157, aspartate 1230, and aspartate 1287. The region spanning 1031–1165 is the RNase H type-1 domain; it reads INTAPCLFSD…TDALLITPIL (135 aa). One can recognise an Integrase catalytic domain in the interval 1219 to 1388; that stretch reads RGLLPNHIWQ…QPIPETHSLI (170 aa). The integrase-type DNA-binding region spans 1393 to 1443; it reads HWYYFKLPGLNSRQWKGPQEALQEAAGAALIPVSANSAQWIPWRLLKQAAC.

As to quaternary structure, homodimer; the homodimers are part of the immature particles. Interacts with human TSG101 and NEDD4; these interactions are essential for budding and release of viral particles. Homodimer; further assembles as homohexamers. The cofactor is Mg(2+). In terms of processing, phosphorylation of the matrix protein p19 by MAPK1 seems to play a role in budding. Myristoylated. Myristoylation of the matrix (MA) domain mediates the transport and binding of Gag polyproteins to the host plasma membrane and is required for the assembly of viral particles. Post-translationally, specific enzymatic cleavages by the viral protease yield mature proteins. The polyprotein is cleaved during and after budding, this process is termed maturation. The protease is autoproteolytically processed at its N- and C-termini.

The protein localises to the virion. The enzyme catalyses Endonucleolytic cleavage to 5'-phosphomonoester.. The catalysed reaction is DNA(n) + a 2'-deoxyribonucleoside 5'-triphosphate = DNA(n+1) + diphosphate. Functionally, the matrix domain targets Gag, Gag-Pro and Gag-Pro-Pol polyproteins to the plasma membrane via a multipartite membrane binding signal, that includes its myristoylated N-terminus. In terms of biological role, matrix protein. Forms the spherical core of the virus that encapsulates the genomic RNA-nucleocapsid complex. Its function is as follows. Binds strongly to viral nucleic acids and promote their aggregation. Also destabilizes the nucleic acids duplexes via highly structured zinc-binding motifs. Functionally, the aspartyl protease mediates proteolytic cleavages of Gag and Gag-Pol polyproteins during or shortly after the release of the virion from the plasma membrane. Cleavages take place as an ordered, step-wise cascade to yield mature proteins. This process is called maturation. Displays maximal activity during the budding process just prior to particle release from the cell (Potential). Cleaves the translation initiation factor eIF4G leading to the inhibition of host cap-dependent translation. In terms of biological role, RT is a multifunctional enzyme that converts the viral RNA genome into dsDNA in the cytoplasm, shortly after virus entry into the cell. This enzyme displays a DNA polymerase activity that can copy either DNA or RNA templates, and a ribonuclease H (RNase H) activity that cleaves the RNA strand of RNA-DNA heteroduplexes in a partially processive 3' to 5'-endonucleasic mode. Conversion of viral genomic RNA into dsDNA requires many steps. A tRNA-Pro binds to the primer-binding site (PBS) situated at the 5'-end of the viral RNA. RT uses the 3' end of the tRNA primer to perform a short round of RNA-dependent minus-strand DNA synthesis. The reading proceeds through the U5 region and ends after the repeated (R) region which is present at both ends of viral RNA. The portion of the RNA-DNA heteroduplex is digested by the RNase H, resulting in a ssDNA product attached to the tRNA primer. This ssDNA/tRNA hybridizes with the identical R region situated at the 3' end of viral RNA. This template exchange, known as minus-strand DNA strong stop transfer, can be either intra- or intermolecular. RT uses the 3' end of this newly synthesized short ssDNA to perform the RNA-dependent minus-strand DNA synthesis of the whole template. RNase H digests the RNA template except for a polypurine tract (PPT) situated at the 5' end of the genome. It is not clear if both polymerase and RNase H activities are simultaneous. RNase H probably can proceed both in a polymerase-dependent (RNA cut into small fragments by the same RT performing DNA synthesis) and a polymerase-independent mode (cleavage of remaining RNA fragments by free RTs). Secondly, RT performs DNA-directed plus-strand DNA synthesis using the PPT that has not been removed by RNase H as primer. PPT and tRNA primers are then removed by RNase H. The 3' and 5' ssDNA PBS regions hybridize to form a circular dsDNA intermediate. Strand displacement synthesis by RT to the PBS and PPT ends produces a blunt ended, linear dsDNA copy of the viral genome that includes long terminal repeats (LTRs) at both ends. Catalyzes viral DNA integration into the host chromosome, by performing a series of DNA cutting and joining reactions. The sequence is that of Gag-Pro-Pol polyprotein (gag-pro-pol) from Homo sapiens (Human).